Consider the following 165-residue polypeptide: Protein-export protein SecB (165 aa).

Belongs to the SecB family. As to quaternary structure, homotetramer, a dimer of dimers. One homotetramer interacts with 1 SecA dimer.

The protein localises to the cytoplasm. Functionally, one of the proteins required for the normal export of preproteins out of the cell cytoplasm. It is a molecular chaperone that binds to a subset of precursor proteins, maintaining them in a translocation-competent state. It also specifically binds to its receptor SecA. This Ruegeria pomeroyi (strain ATCC 700808 / DSM 15171 / DSS-3) (Silicibacter pomeroyi) protein is Protein-export protein SecB.